Consider the following 223-residue polypeptide: MVKSKRNVVVNMTKVTKNPGEKKKKLVSTIKDIVDQYKFIYLFTFENMRNNKLKSVRTEWSTSKFLFGKNKVLSVGLGKSEEDELKPNLHKLTEHLEGECGLFFTNEPKDKVFEYFTNYSEKDFPRSGFVSEETITIKEGPIVGMTHSMETYLRGLGLPTTLKNGVIFVDREYTLCEAGVAVTPEQSQLLKLFNHEISEFKFHIKGFWNEDEFTLCEEESQEE.

The protein belongs to the universal ribosomal protein uL10 family. Associates with the pre-60S ribosomal particle.

It is found in the nucleus. It localises to the nucleolus. Its subcellular location is the cytoplasm. In terms of biological role, component of the ribosome assembly machinery. Nuclear paralog of the ribosomal protein P0, it binds pre-60S subunits at an early stage of assembly in the nucleolus, and is replaced by P0 in cytoplasmic pre-60S subunits and mature 80S ribosomes. The polypeptide is Ribosome assembly factor mrt4 (Dictyostelium discoideum (Social amoeba)).